The following is a 661-amino-acid chain: DnaJ protein ERDJ2B (661 aa).

At 1-8 (MAESEENS) the chain is on the lumenal side. A helical transmembrane segment spans residues 9–29 (VLFPIFILTMMAIPLVPYTFV). The Cytoplasmic segment spans residues 30–65 (KLSRAFSKKQRSIHCQCLECDRSGKYKRSISQSISS). The chain crosses the membrane as a helical span at residues 66-86 (FTSCSNLTVVLLWIVMIFLIY). Residues 87 to 190 (HTKNMSRESQ…FILNMNGESG (104 aa)) are Lumenal-facing. An N-linked (GlcNAc...) asparagine glycan is attached at asparagine 90. The region spanning 99-164 (EPFGILGLEP…LSRENFEKYG (66 aa)) is the J domain. A helical membrane pass occupies residues 191–211 (GILLLCTVGLCILLPLVIASI). In terms of domain architecture, SEC63 spans 206–597 (LVIASIYLWR…IGCDQKTSLK (392 aa)). The Cytoplasmic portion of the chain corresponds to 212–661 (YLWRSSKYTG…SSEESGSDEE (450 aa)). A disordered region spans residues 608 to 661 (EGENAEEGLEEEDDEIEEEDYESEYSEDEEDKKRGSKKKVNKESSSEESGSDEE). Acidic residues predominate over residues 609-637 (GENAEEGLEEEDDEIEEEDYESEYSEDEE).

In terms of assembly, interacts with OEP61/TPR7. Expressed in leaves, flower buds and flowers.

Its subcellular location is the endoplasmic reticulum membrane. In terms of biological role, required for integral membrane and secreted preprotein translocation across the endoplasmic reticulum membrane. The sequence is that of DnaJ protein ERDJ2B (ERDJ2B) from Arabidopsis thaliana (Mouse-ear cress).